Reading from the N-terminus, the 226-residue chain is Lipoprotein-releasing system ATP-binding protein LolD (226 aa).

The 221-residue stretch at 6–226 (LSVEQVSKSF…QLQQGSLIRI (221 aa)) folds into the ABC transporter domain. 42–49 (GESGCGKS) contacts ATP.

It belongs to the ABC transporter superfamily. Lipoprotein translocase (TC 3.A.1.125) family. The complex is composed of two ATP-binding proteins (LolD) and two transmembrane proteins (LolC and LolE).

Its subcellular location is the cell inner membrane. Part of the ABC transporter complex LolCDE involved in the translocation of mature outer membrane-directed lipoproteins, from the inner membrane to the periplasmic chaperone, LolA. Responsible for the formation of the LolA-lipoprotein complex in an ATP-dependent manner. The sequence is that of Lipoprotein-releasing system ATP-binding protein LolD from Treponema pallidum (strain Nichols).